We begin with the raw amino-acid sequence, 122 residues long: Large ribosomal subunit protein uL14 (122 aa).

It belongs to the universal ribosomal protein uL14 family. In terms of assembly, part of the 50S ribosomal subunit. Forms a cluster with proteins L3 and L19. In the 70S ribosome, L14 and L19 interact and together make contacts with the 16S rRNA in bridges B5 and B8.

In terms of biological role, binds to 23S rRNA. Forms part of two intersubunit bridges in the 70S ribosome. The sequence is that of Large ribosomal subunit protein uL14 from Shewanella denitrificans (strain OS217 / ATCC BAA-1090 / DSM 15013).